The following is a 190-amino-acid chain: Protein shisa-like-2A (190 aa).

2 consecutive transmembrane segments (helical) span residues 48–68 (SFFP…LIGL) and 70–90 (VAAV…YLFI).

It belongs to the shisa family.

It localises to the membrane. The chain is Protein shisa-like-2A from Homo sapiens (Human).